Here is a 110-residue protein sequence, read N- to C-terminus: Proline-rich protein 15-like protein A (110 aa).

2 disordered regions span residues 29–51 (IAGD…TDSQ) and 65–110 (TKGR…KSGK). Residues 65–85 (TKGRHVKVSHSGRFKEKKRIR) show a composition bias toward basic residues. Over residues 100-110 (TTANENNKSGK) the composition is skewed to polar residues.

It belongs to the PRR15 family.

In Danio rerio (Zebrafish), this protein is Proline-rich protein 15-like protein A (prr15la).